A 517-amino-acid polypeptide reads, in one-letter code: MEELQGYLEKDGSRQQNFLYPLIFQEYIYTLAHDHGLNSSIFYEPMEIVGLGYDNKSSSVLVKRLITRMYQQNSLIYSMNDFNQNRFVGHNNSFYSNLDSQMVSEGFAVIVEIPFSLRLVPSSEEIPKSQNLRSIHSIFPFLEDKLSHLNYVLDILIPYPIHLEILVQILQCWIQDVPSLHFLRLFLHEFHNWNNLITPTKSISVFSKENKRLFRILYNSYVSEYEFVFVFLRKQSYYLRSTSSRAFLERTHFYVKIEHLIDIDVCHNHFQKILWFFKDSFMHYVRYKGKAILASRGTYLLIKKWKCYLVNFWQYNFHFWSKPYRIHINPFSNYSFYFLGYISSVLINPSAVKNQMLENFYLVDTLTQKFDTIVPVIPLIGSLSKAKFCTILGHPISKPIWAELSDSDIIDRFGRICRNLSHYHSGSSKKQSLYRIKYILRLSCARTLARKHKSTVRNLLQRLGSGLLEEFFTEEEQVISPIFPKTTLFPLHGSHKERIWYLDIIRINDLANYLDWS.

It belongs to the intron maturase 2 family. MatK subfamily.

It localises to the plastid. Its subcellular location is the chloroplast. Functionally, usually encoded in the trnK tRNA gene intron. Probably assists in splicing its own and other chloroplast group II introns. This Trillium maculatum (Spotted wakerobin) protein is Maturase K.